Here is a 303-residue protein sequence, read N- to C-terminus: 5'-3' exonuclease (303 aa).

The 84-residue stretch at 179–262 (ISPAQWVDVK…LATITTEIEA (84 aa)) folds into the 5'-3' exonuclease domain.

Functionally, 5'-3' exonuclease acting preferentially on double-stranded DNA. This is 5'-3' exonuclease from Halalkalibacterium halodurans (strain ATCC BAA-125 / DSM 18197 / FERM 7344 / JCM 9153 / C-125) (Bacillus halodurans).